Here is a 98-residue protein sequence, read N- to C-terminus: NADH-ubiquinone oxidoreductase chain 4L (98 aa).

The next 3 membrane-spanning stretches (helical) occupy residues 1-21 (MSPVYFSFSSAFILGLMGLAF), 26-46 (LLSALLCLEGMMLSLFIAIAL), and 61-81 (MILLTFSACEASAGLALLVAA).

The protein belongs to the complex I subunit 4L family.

The protein resides in the mitochondrion membrane. The catalysed reaction is a ubiquinone + NADH + 5 H(+)(in) = a ubiquinol + NAD(+) + 4 H(+)(out). Functionally, core subunit of the mitochondrial membrane respiratory chain NADH dehydrogenase (Complex I) which catalyzes electron transfer from NADH through the respiratory chain, using ubiquinone as an electron acceptor. Part of the enzyme membrane arm which is embedded in the lipid bilayer and involved in proton translocation. This chain is NADH-ubiquinone oxidoreductase chain 4L (MT-ND4L), found in Squalus acanthias (Spiny dogfish).